The following is a 67-amino-acid chain: Probable Sec-independent protein translocase protein TatE (67 aa).

The chain crosses the membrane as a helical span at residues 4–21 (ISITKLLVVAALVVLLFG). The disordered stretch occupies residues 46–67 (EDAGAKKEAGGDIQAEKLSHKE).

It belongs to the TatA/E family. TatE subfamily.

It is found in the cell inner membrane. Its function is as follows. Part of the twin-arginine translocation (Tat) system that transports large folded proteins containing a characteristic twin-arginine motif in their signal peptide across membranes. TatE shares overlapping functions with TatA. This is Probable Sec-independent protein translocase protein TatE from Citrobacter koseri (strain ATCC BAA-895 / CDC 4225-83 / SGSC4696).